We begin with the raw amino-acid sequence, 301 residues long: Probable alpha-L-glutamate ligase (301 aa).

One can recognise an ATP-grasp domain in the interval 104 to 287; it reads LQLLSRKGIG…VAGMIVEFIE (184 aa). ATP is bound by residues Lys141, 178 to 179, Asp187, and 211 to 213; these read EF and RSN. The Mg(2+) site is built by Asp248, Glu260, and Asn262. Mn(2+) is bound by residues Asp248, Glu260, and Asn262.

Belongs to the RimK family. Mg(2+) serves as cofactor. It depends on Mn(2+) as a cofactor.

In Teredinibacter turnerae (strain ATCC 39867 / T7901), this protein is Probable alpha-L-glutamate ligase.